The sequence spans 146 residues: 3-dehydroquinate dehydratase (146 aa).

Y22 serves as the catalytic Proton acceptor. Residues N73, H79, and D86 each coordinate substrate. Residue H99 is the Proton donor of the active site. Substrate-binding positions include 100-101 (LS) and R110.

Belongs to the type-II 3-dehydroquinase family. In terms of assembly, homododecamer.

The enzyme catalyses 3-dehydroquinate = 3-dehydroshikimate + H2O. Its pathway is metabolic intermediate biosynthesis; chorismate biosynthesis; chorismate from D-erythrose 4-phosphate and phosphoenolpyruvate: step 3/7. Catalyzes a trans-dehydration via an enolate intermediate. The polypeptide is 3-dehydroquinate dehydratase (Synechococcus sp. (strain CC9605)).